The chain runs to 131 residues: Large ribosomal subunit protein bL17 (131 aa).

The protein belongs to the bacterial ribosomal protein bL17 family. In terms of assembly, part of the 50S ribosomal subunit. Contacts protein L32.

The chain is Large ribosomal subunit protein bL17 from Azoarcus sp. (strain BH72).